The following is a 194-amino-acid chain: GTTPNSEGWHDGYYYSWWSDGGGDSTYTNNSGGTYEITWGNGGNLVGGKGWNPGLNARAIHFTGVYQPNGTSYLSVYGWTRNPLVEYYIVENFGSSNPSSGSTDLGTVSCDGSTYTLGQSTRYNAPSIDGTQTFNQYWSVRQDKRSSGTVQTGCHFDAWASAGLNVTGDHYYQIVATEGYFSSGYARITVADVG.

An N-acetylglycine modification is found at Gly1. The 191-residue stretch at 1-191 (GTTPNSEGWH…SSGYARITVA (191 aa)) folds into the GH11 domain. The active-site Nucleophile is the Glu86. Cys110 and Cys154 are joined by a disulfide. Residue Glu178 is the Proton donor of the active site.

Belongs to the glycosyl hydrolase 11 (cellulase G) family.

The enzyme catalyses Endohydrolysis of (1-&gt;4)-beta-D-xylosidic linkages in xylans.. The protein operates within glycan degradation; xylan degradation. The sequence is that of Endo-1,4-beta-xylanase from Byssochlamys spectabilis (Paecilomyces variotii).